We begin with the raw amino-acid sequence, 235 residues long: PRA1 family protein 1 (235 aa).

A compositionally biased stretch (polar residues) spans 1-17 (MESNSNSNETMYGNPNI). The interval 1-55 (MESNSNSNETMYGNPNINMGFVDSGNSNIGNNTGSMSPPPQQQQQPQQASSTPAG) is disordered. Residues 24 to 48 (SGNSNIGNNTGSMSPPPQQQQQPQQ) are compositionally biased toward low complexity. The next 2 membrane-spanning stretches (helical) occupy residues 144–164 (SVFFIITNPFYLLLLGVLLFI) and 187–207 (AFLSIYFLLYAGSSIFWLVGA).

This sequence belongs to the PRA1 family.

It localises to the membrane. Its function is as follows. May act as a general Rab protein regulator. This chain is PRA1 family protein 1 (prafA), found in Dictyostelium discoideum (Social amoeba).